The primary structure comprises 755 residues: MTTTPKEREPKVKVSVDVDPVPTSFEKWAKPGHFDRSLSRGPKTTTWIWNLHALAHDFDSHTSDLEDVSRKIFSAHFGHLAVVFVWLSGMYYHGAQFSNYSAWLADPINIKPSAQVVWPIFGQEILNGDVGGGFEGIRITSGLFHLWRAAGITNEFQLLCTAIGGLVMAGLCLFAGWFHYHKRAPKLEWFQNVESMLNHHLAGLLGLGSLAWAGHQIHVAIPINKMLDAGVPADQVPLPHEFILKPALMKEMFPSVDWGIFSGVVPFFTLDWGKYAEFLTFKGGLDPQNGALWLTDQAHHHLAIAVLFIVAGHMYRTNWGIGHSIKEILEAHKGPFTGEGHKGLYEVLTTSWHAQLAINLAMVGSLSIIVAQHMYAMNPYPYMGIDYATQISLFTHHMWIGGFFVVGGAAHGAIYMVRDYDPAVNRNNVLDRVLRHRDAIISHLNWVCLFLGFHAFGFYVHNDTMQALGRPQDMFSDTGIQLQPIFAQWIQSLHTSAIASTAPYVGASVSPIFGGDVVAVGGKVSMMPMVLGTADFMVHHIHAMTIHITVLILLKGVLFARSSRLIPDKGKLGFRFPCDGPGRGGTCQVSGWDHVFLGLFWMYNCISIVIFHFSWKMQSDIWGTVNADGTIEHITGGNFAASAININGWLRDFLWAQSVQVINSYGSALSAYGLLFLGAHFVWAFSLMFLFSGRGYWQELIESIVWAHNKLKVAPAIQPRALSIIQGRAVGVAHYLLGGIVTTWAFFLARFGALG.

Helical transmembrane passes span 72–95, 158–181, 197–221, 297–315, 352–375, 391–417, 439–461, and 536–554; these read IFSA…YHGA, LLCT…FHYH, LNHH…HVAI, QAHH…GHMY, WHAQ…QHMY, ISLF…IYMV, AIIS…FYVH, and FMVH…LILL. [4Fe-4S] cluster-binding residues include Cys578 and Cys587. The next 2 helical transmembrane spans lie at 594-615 and 669-691; these read HVFL…HFSW and LSAY…MFLF. His680 is a binding site for chlorophyll a'. 2 residues coordinate chlorophyll a: Met688 and Tyr696. Trp697 is a phylloquinone binding site. Residues 729-749 form a helical membrane-spanning segment; that stretch reads AVGVAHYLLGGIVTTWAFFLA.

It belongs to the PsaA/PsaB family. The PsaA/B heterodimer binds the P700 chlorophyll special pair and subsequent electron acceptors. PSI consists of a core antenna complex that captures photons, and an electron transfer chain that converts photonic excitation into a charge separation. The cyanobacterial PSI reaction center is composed of one copy each of PsaA,B,C,D,E,F,I,J,K,L,M and X, and forms trimeric complexes. Requires PSI electron transfer chain: 5 chlorophyll a, 1 chlorophyll a', 2 phylloquinones and 3 4Fe-4S clusters. PSI core antenna: 90 chlorophyll a, 22 carotenoids, 3 phospholipids and 1 galactolipid. P700 is a chlorophyll a/chlorophyll a' dimer, A0 is one or more chlorophyll a, A1 is one or both phylloquinones and FX is a shared 4Fe-4S iron-sulfur center. as cofactor.

It is found in the cellular thylakoid membrane. The catalysed reaction is reduced [plastocyanin] + hnu + oxidized [2Fe-2S]-[ferredoxin] = oxidized [plastocyanin] + reduced [2Fe-2S]-[ferredoxin]. In terms of biological role, psaA and PsaB bind P700, the primary electron donor of photosystem I (PSI), as well as the electron acceptors A0, A1 and FX. PSI is a plastocyanin/cytochrome c6-ferredoxin oxidoreductase, converting photonic excitation into a charge separation, which transfers an electron from the donor P700 chlorophyll pair to the spectroscopically characterized acceptors A0, A1, FX, FA and FB in turn. Oxidized P700 is reduced on the lumenal side of the thylakoid membrane by plastocyanin or cytochrome c6. This chain is Photosystem I P700 chlorophyll a apoprotein A1, found in Synechococcus sp. (strain JA-2-3B'a(2-13)) (Cyanobacteria bacterium Yellowstone B-Prime).